The sequence spans 655 residues: FYVE, RhoGEF and PH domain-containing protein 2 (655 aa).

Phosphoserine is present on residues S11 and S48. Positions 18 to 64 are disordered; sequence VFENSRTPEAAPRGQRLEDVHHRPECRPPESPGPREKTNVGEAVGSE. Basic and acidic residues predominate over residues 32–56; the sequence is QRLEDVHHRPECRPPESPGPREKTN. The 189-residue stretch at 102–290 folds into the DH domain; sequence PEKKIVQELL…FSAAQHSNAA (189 aa). Residues 319–418 enclose the PH 1 domain; the sequence is TLLREGPVLK…WMQAFQAAID (100 aa). An FYVE-type zinc finger spans residues 458-518; it reads DKMVTMCMRC…VCLHCYAFLT (61 aa). C464, C467, C481, C484, C489, C492, C510, and C513 together coordinate Zn(2+). The region spanning 544–641 is the PH 2 domain; that stretch reads QSLMCSFLQL…WVKAMERAAS (98 aa). Position 654 is a phosphoserine (S654).

It localises to the cytoplasm. It is found in the cytoskeleton. The protein resides in the nucleus. Its subcellular location is the early endosome. The protein localises to the early endosome membrane. It localises to the cell projection. It is found in the ruffle membrane. In terms of biological role, activates CDC42, a member of the Ras-like family of Rho- and Rac proteins, by exchanging bound GDP for free GTP. Activates JNK1 via CDC42 but not RAC1. Binds to phosphatidylinositol 4,5-bisphosphate, phosphatidylinositol 3,4,5-trisphosphate, phosphatidylinositol 5-monophosphate, phosphatidylinositol 4-monophosphate and phosphatidylinositol 3-monophosphate. This chain is FYVE, RhoGEF and PH domain-containing protein 2 (FGD2), found in Homo sapiens (Human).